Here is a 545-residue protein sequence, read N- to C-terminus: Phenylalanine--tRNA ligase beta subunit (545 aa).

The region spanning 268 to 343 (FLHKIQNVRE…MSIGYNNLEP (76 aa)) is the B5 domain. Mg(2+)-binding residues include D321, D327, E330, and D331.

It belongs to the phenylalanyl-tRNA synthetase beta subunit family. Type 2 subfamily. In terms of assembly, tetramer of two alpha and two beta subunits. Mg(2+) is required as a cofactor.

It localises to the cytoplasm. The catalysed reaction is tRNA(Phe) + L-phenylalanine + ATP = L-phenylalanyl-tRNA(Phe) + AMP + diphosphate + H(+). The sequence is that of Phenylalanine--tRNA ligase beta subunit from Saccharolobus islandicus (strain M.16.27) (Sulfolobus islandicus).